The following is a 424-amino-acid chain: Probable ribonuclease FAU-1 (424 aa).

Belongs to the FAU-1 family.

Its function is as follows. Probable RNase involved in rRNA stability through maturation and/or degradation of precursor rRNAs. Binds to RNA in loop regions with AU-rich sequences. The sequence is that of Probable ribonuclease FAU-1 from Saccharolobus islandicus (strain M.16.27) (Sulfolobus islandicus).